The primary structure comprises 800 residues: DEP domain-containing protein 1A (800 aa).

A DEP domain is found at 24-108 (FRAGMPLKKH…DNSQLYRFPS (85 aa)). 3 disordered regions span residues 147–173 (ETLENVDPETQESPVGSSSGETERSRE), 306–326 (SQPGKRKNQEEPNCPQPAKNP), and 459–485 (INTSGSSVSSQLSADLRRNNSRPARAR). In terms of domain architecture, Rho-GAP spans 281–321 (PLLTYQYYELFVNILVMCGYITTPKSQPGKRKNQEEPNCPQ). Over residues 459–468 (INTSGSSVSS) the composition is skewed to low complexity.

The sequence is that of DEP domain-containing protein 1A (depdc1a) from Danio rerio (Zebrafish).